We begin with the raw amino-acid sequence, 85 residues long: Large ribosomal subunit protein bL27 (85 aa).

Residues 1 to 20 (MAHKKAAGSTRNGRDSEAKR) are disordered.

This sequence belongs to the bacterial ribosomal protein bL27 family.

This is Large ribosomal subunit protein bL27 from Colwellia psychrerythraea (strain 34H / ATCC BAA-681) (Vibrio psychroerythus).